Here is a 202-residue protein sequence, read N- to C-terminus: MPGQQRRGGGSGGSDRRERRDRSGGGPAQEKNAYVERVVAINRVAKVVKGGRRFSFTALVVVGDADGTVGVGYGKAKEVPAAIAKGVEEAKKHFFKVPRIGSTIPHPVQGEEAAGVVLLKPASPGTGVIAGGPVRAVLECAGVHDVLSKSLGSSNPINIVHATVAALRGLMRPEEIAARRGLPLEDVAPPAMLRARAAGAGV.

Residues 1-13 are compositionally biased toward gly residues; that stretch reads MPGQQRRGGGSGG. Positions 1–31 are disordered; sequence MPGQQRRGGGSGGSDRRERRDRSGGGPAQEK. The segment covering 14-23 has biased composition (basic and acidic residues); sequence SDRRERRDRS. Residues 34–97 form the S5 DRBM domain; the sequence is YVERVVAINR…EEAKKHFFKV (64 aa).

The protein belongs to the universal ribosomal protein uS5 family. Part of the 30S ribosomal subunit. Contacts proteins S4 and S8.

Functionally, with S4 and S12 plays an important role in translational accuracy. In terms of biological role, located at the back of the 30S subunit body where it stabilizes the conformation of the head with respect to the body. The polypeptide is Small ribosomal subunit protein uS5 (Frankia alni (strain DSM 45986 / CECT 9034 / ACN14a)).